Reading from the N-terminus, the 457-residue chain is D-hydantoinase (457 aa).

Residues His-57 and His-59 each contribute to the Zn(2+) site. The residue at position 69 (Ser-69) is a Phosphoserine. A Zn(2+)-binding site is contributed by Lys-148. Position 148 is an N6-carboxylysine (Lys-148). Tyr-153 is a binding site for substrate. Positions 181 and 237 each coordinate Zn(2+). Thr-286 is a substrate binding site. Residue Asp-313 coordinates Zn(2+). Asn-335 contacts substrate.

This sequence belongs to the metallo-dependent hydrolases superfamily. Hydantoinase/dihydropyrimidinase family. Homodimer and homotetramer. The cofactor is Zn(2+). Carboxylation allows a single lysine to coordinate two zinc ions.

Functionally, catalyzes the stereospecific hydrolysis of the cyclic amide bond of D-hydantoin derivatives. This is D-hydantoinase (hyuA) from Ralstonia pickettii (Burkholderia pickettii).